We begin with the raw amino-acid sequence, 216 residues long: Guanylate kinase (216 aa).

The Guanylate kinase-like domain maps to 11 to 189 (GVLIVISGPS…AVKKIEAILL (179 aa)). ATP is bound at residue 18 to 25 (GPSGAGKG).

Belongs to the guanylate kinase family.

The protein resides in the cytoplasm. The catalysed reaction is GMP + ATP = GDP + ADP. Functionally, essential for recycling GMP and indirectly, cGMP. The polypeptide is Guanylate kinase (Clostridium perfringens (strain ATCC 13124 / DSM 756 / JCM 1290 / NCIMB 6125 / NCTC 8237 / Type A)).